The sequence spans 162 residues: Protein cornichon homolog 2 (162 aa).

Over 1-10 (MAFTFAAFCY) the chain is Cytoplasmic. Residues 11-31 (MLTLVLCASLIFFIIWHIIAF) form a helical membrane-spanning segment. The Lumenal segment spans residues 32–72 (DDLRTDFKDPIEQGNPSRARERIKNVERVCCLLRKLVVPEY). The chain crosses the membrane as a helical span at residues 73 to 93 (CIHGLFCLMFMCAAEWVTLGL). Residues 94 to 138 (NIPLLFYHLWRYFHRPADGSEVMFDPVSIMNVDILNYCQKEAWCK) are Cytoplasmic-facing. Residues 139–161 (LAFYLLSFFYYLYRVGATVRYVS) form a helical membrane-spanning segment. Residue Ala-162 is a topological domain, lumenal.

This sequence belongs to the cornichon family.

It localises to the membrane. Its function is as follows. Regulates the trafficking and gating properties of AMPA-selective glutamate receptors (AMPARs). The sequence is that of Protein cornichon homolog 2 (cnih2) from Xenopus laevis (African clawed frog).